The primary structure comprises 702 residues: Polyribonucleotide nucleotidyltransferase 1 (702 aa).

Positions 483 and 489 each coordinate Mg(2+). The region spanning 550–609 is the KH domain; it reads PQVTKLKVHPDKVREVIGAGGKVINKIIDETGVKINIENDGTIYIAAPDQESARVALEMI. Residues 619–687 enclose the S1 motif domain; the sequence is GEVYTGKVIK…PQGKIGLSRK (69 aa).

The protein belongs to the polyribonucleotide nucleotidyltransferase family. It depends on Mg(2+) as a cofactor.

It localises to the cytoplasm. The enzyme catalyses RNA(n+1) + phosphate = RNA(n) + a ribonucleoside 5'-diphosphate. Involved in mRNA degradation. Catalyzes the phosphorolysis of single-stranded polyribonucleotides processively in the 3'- to 5'-direction. This chain is Polyribonucleotide nucleotidyltransferase 1, found in Alkaliphilus metalliredigens (strain QYMF).